The primary structure comprises 291 residues: Porphobilinogen deaminase (291 aa).

Residue cysteine 238 is modified to S-(dipyrrolylmethanemethyl)cysteine.

It belongs to the HMBS family. As to quaternary structure, monomer. It depends on dipyrromethane as a cofactor.

The catalysed reaction is 4 porphobilinogen + H2O = hydroxymethylbilane + 4 NH4(+). It participates in porphyrin-containing compound metabolism; protoporphyrin-IX biosynthesis; coproporphyrinogen-III from 5-aminolevulinate: step 2/4. Its function is as follows. Tetrapolymerization of the monopyrrole PBG into the hydroxymethylbilane pre-uroporphyrinogen in several discrete steps. The polypeptide is Porphobilinogen deaminase (Clostridium beijerinckii (strain ATCC 51743 / NCIMB 8052) (Clostridium acetobutylicum)).